We begin with the raw amino-acid sequence, 715 residues long: Polyribonucleotide nucleotidyltransferase (715 aa).

Mg(2+) is bound by residues Asp500 and Asp506. The KH domain occupies 567 to 634 (PKVKMIRINP…AYIESLVREA (68 aa)). The region spanning 637-712 (GELYEAKVTR…ERGRVDLSRK (76 aa)) is the S1 motif domain.

It belongs to the polyribonucleotide nucleotidyltransferase family. Requires Mg(2+) as cofactor.

Its subcellular location is the cytoplasm. The enzyme catalyses RNA(n+1) + phosphate = RNA(n) + a ribonucleoside 5'-diphosphate. Functionally, involved in mRNA degradation. Catalyzes the phosphorolysis of single-stranded polyribonucleotides processively in the 3'- to 5'-direction. This chain is Polyribonucleotide nucleotidyltransferase, found in Acholeplasma laidlawii (strain PG-8A).